The sequence spans 360 residues: Farnesyl pyrophosphate synthase (360 aa).

Residues K52, R55, and Q90 each coordinate isopentenyl diphosphate. Mg(2+) is bound by residues D97 and D101. R106 serves as a coordination point for dimethylallyl diphosphate. R107 is an isopentenyl diphosphate binding site. Residues K194, T195, Q237, K254, and K263 each coordinate dimethylallyl diphosphate.

Belongs to the FPP/GGPP synthase family. It depends on Mg(2+) as a cofactor.

It catalyses the reaction isopentenyl diphosphate + dimethylallyl diphosphate = (2E)-geranyl diphosphate + diphosphate. The enzyme catalyses isopentenyl diphosphate + (2E)-geranyl diphosphate = (2E,6E)-farnesyl diphosphate + diphosphate. The protein operates within isoprenoid biosynthesis; farnesyl diphosphate biosynthesis; farnesyl diphosphate from geranyl diphosphate and isopentenyl diphosphate: step 1/1. It functions in the pathway isoprenoid biosynthesis; geranyl diphosphate biosynthesis; geranyl diphosphate from dimethylallyl diphosphate and isopentenyl diphosphate: step 1/1. Farnesyl pyrophosphate synthase; part of the second module of ergosterol biosynthesis pathway that includes the middle steps of the pathway. The second module involves the formation of farnesyl diphosphate, which is also an important intermediate in the biosynthesis of ubiquinone, dolichol, heme and prenylated proteins. This module also plays a key role in the biosynthesis of triterpenes such as ganoderic acids (GA), a group of highly oxygenated lanostane-type triterpenoids which are well recognized as a main group of unique bioactive compounds in the medicinal mushroom Ganoderma lucidum. Activity by the mevalonate kinase first converts mevalonate into 5-phosphomevalonate. 5-phosphomevalonate is then further converted to 5-diphosphomevalonate by the phosphomevalonate kinase. The diphosphomevalonate decarboxylase MVD then produces isopentenyl diphosphate. The isopentenyl-diphosphate delta-isomerase then catalyzes the 1,3-allylic rearrangement of the homoallylic substrate isopentenyl (IPP) to its highly electrophilic allylic isomer, dimethylallyl diphosphate (DMAPP). Finally the farnesyl diphosphate synthase FPS catalyzes the sequential condensation of isopentenyl pyrophosphate with dimethylallyl pyrophosphate, and then with the resultant geranylpyrophosphate to the ultimate product farnesyl pyrophosphate. The polypeptide is Farnesyl pyrophosphate synthase (Ganoderma lucidum (Ling zhi medicinal fungus)).